We begin with the raw amino-acid sequence, 277 residues long: F420-dependent methylenetetrahydromethanopterin dehydrogenase (277 aa).

Residues 252–277 (MDAVSRKPHHPEGKRLSKKALMEKPE) are disordered.

The protein belongs to the MTD family.

The enzyme catalyses 5,10-methylenetetrahydromethanopterin + oxidized coenzyme F420-(gamma-L-Glu)(n) + 2 H(+) = 5,10-methenyl-5,6,7,8-tetrahydromethanopterin + reduced coenzyme F420-(gamma-L-Glu)(n). The protein operates within one-carbon metabolism; methanogenesis from CO(2); 5,10-methylene-5,6,7,8-tetrahydromethanopterin from 5,10-methenyl-5,6,7,8-tetrahydromethanopterin (coenzyme F420 route): step 1/1. Its function is as follows. Catalyzes the reversible reduction of methenyl-H(4)MPT(+) to methylene-H(4)MPT. This chain is F420-dependent methylenetetrahydromethanopterin dehydrogenase (mtd), found in Methanocaldococcus jannaschii (strain ATCC 43067 / DSM 2661 / JAL-1 / JCM 10045 / NBRC 100440) (Methanococcus jannaschii).